The following is a 132-amino-acid chain: UPF0102 protein Acid_2433 (132 aa).

Belongs to the UPF0102 family.

The sequence is that of UPF0102 protein Acid_2433 from Solibacter usitatus (strain Ellin6076).